A 284-amino-acid chain; its full sequence is Diaminopimelate epimerase (284 aa).

Asn-14 and Asn-67 together coordinate substrate. Cys-76 serves as the catalytic Proton donor. Substrate-binding positions include 77-78 (GN), Asn-166, Asn-199, and 217-218 (ER). Cys-226 functions as the Proton acceptor in the catalytic mechanism. 227–228 (GT) lines the substrate pocket.

The protein belongs to the diaminopimelate epimerase family. As to quaternary structure, homodimer.

It is found in the cytoplasm. The enzyme catalyses (2S,6S)-2,6-diaminopimelate = meso-2,6-diaminopimelate. It participates in amino-acid biosynthesis; L-lysine biosynthesis via DAP pathway; DL-2,6-diaminopimelate from LL-2,6-diaminopimelate: step 1/1. In terms of biological role, catalyzes the stereoinversion of LL-2,6-diaminopimelate (L,L-DAP) to meso-diaminopimelate (meso-DAP), a precursor of L-lysine and an essential component of the bacterial peptidoglycan. This Bacillus pumilus (strain SAFR-032) protein is Diaminopimelate epimerase.